The chain runs to 467 residues: UDP-N-acetylmuramoylalanine--D-glutamate ligase (467 aa).

121–127 (GTNGKST) is a binding site for ATP.

It belongs to the MurCDEF family.

Its subcellular location is the cytoplasm. It catalyses the reaction UDP-N-acetyl-alpha-D-muramoyl-L-alanine + D-glutamate + ATP = UDP-N-acetyl-alpha-D-muramoyl-L-alanyl-D-glutamate + ADP + phosphate + H(+). The protein operates within cell wall biogenesis; peptidoglycan biosynthesis. Functionally, cell wall formation. Catalyzes the addition of glutamate to the nucleotide precursor UDP-N-acetylmuramoyl-L-alanine (UMA). The polypeptide is UDP-N-acetylmuramoylalanine--D-glutamate ligase (Chelativorans sp. (strain BNC1)).